We begin with the raw amino-acid sequence, 557 residues long: Glypican-1 (557 aa).

Residues 1–23 (MELRTRGWWLLCAAAALVVCARG) form the signal peptide. Disulfide bonds link C32–C68, C62–C255, C69–C258, C190–C342, C245–C278, C267–C414, and C271–C400. N79 and N116 each carry an N-linked (GlcNAc...) asparagine glycan. Residues 477–531 (FQDASDDGSGSGSGGGCPDDTCGRRVSKKSSSSRTPLTHALPGLSEQEGQKTSAA) are disordered. O-linked (Xyl...) (heparan sulfate) serine glycosylation is found at S485, S487, and S489. S529 carries GPI-anchor amidated serine lipidation. The propeptide at 530-557 (AATCPEPHSFFLLFLVTLVLAAARPRWR) is removed in mature form.

Belongs to the glypican family. S-nitrosylated in a Cu(2+)-dependent manner. Nitric acid (NO) is released from the nitrosylated cysteines by ascorbate or by some other reducing agent, in a Cu(2+) or Zn(2+) dependent manner. This free nitric oxide is then capable of cleaving the heparan sulfate side chains. In terms of processing, N- and O-glycosylated. N-glycosylation is mainly of the complex type containing sialic acid. O-glycosylated with heparan sulfate. The heparan sulfate chains can be cleaved either by the action of heparanase or, degraded by a deaminative process that uses nitric oxide (NO) released from the S-nitrosylated cysteines. This process is triggered by ascorbate, or by some other reducing agent, in a Cu(2+)- or Zn(2+) dependent manner. Cu(2+) ions are provided by ceruloproteins such as APP, PRNP or CP which associate with GCP1 in intracellular compartments or lipid rafts. Post-translationally, this cell-associated glypican is further processed to give rise to a medium-released species.

It is found in the cell membrane. Its subcellular location is the endosome. The protein resides in the secreted. The protein localises to the extracellular space. Cell surface proteoglycan that bears heparan sulfate. Binds, via the heparan sulfate side chains, alpha-4 (V) collagen and participates in Schwann cell myelination. May act as a catalyst in increasing the rate of conversion of prion protein PRPN(C) to PRNP(Sc) via associating (via the heparan sulfate side chains) with both forms of PRPN, targeting them to lipid rafts and facilitating their interaction. Required for proper skeletal muscle differentiation by sequestering FGF2 in lipid rafts preventing its binding to receptors (FGFRs) and inhibiting the FGF-mediated signaling. Binds Cu(2+) or Zn(2+) ions. The polypeptide is Glypican-1 (Gpc1) (Mus musculus (Mouse)).